The following is a 136-amino-acid chain: Large ribosomal subunit protein uL16 (136 aa).

It belongs to the universal ribosomal protein uL16 family. Part of the 50S ribosomal subunit.

Its function is as follows. Binds 23S rRNA and is also seen to make contacts with the A and possibly P site tRNAs. The chain is Large ribosomal subunit protein uL16 from Rickettsia africae (strain ESF-5).